The primary structure comprises 213 residues: Ras-related protein Rab-25 (213 aa).

Residues S21, G24, K25, T26, N27, S38, H39, T43, and T44 each contribute to the GTP site. T26 is a Mg(2+) binding site. 2 consecutive short sequence motifs (switch) follow at residues 35 to 49 (NEFSHDSRTTIGVEF) and 67 to 84 (DTAGLERYRAITSAYYRG). Mg(2+) is bound by residues T44 and D67. G70, N125, K126, D128, A156, and L157 together coordinate GTP. Residues C209 and C210 are each lipidated (S-geranylgeranyl cysteine). C210 bears the Cysteine methyl ester mark. A propeptide spans 211–213 (INL) (removed in mature form).

It belongs to the small GTPase superfamily. Rab family. Interacts (GTP-bound form) with RAB11FIP1, RAB11FIP2, RAB11FIP3 and RAB11FIP4. Interacts (via the hypervariable C-terminal region) with ITGB1 (via the cytoplasmic region); the interaction is GTP-dependent. Interacts with ITGAV. Associates with the integrin alpha-V/beta-1 heterodimer. Interacts with VPS33B. Mg(2+) is required as a cofactor. As to expression, expression is restricted to epithelial cells. Expressed in the gastrointestinal mucosa, (highest expression seen in the ileum and colon), kidney, and lung. A very minor and variable level of expression is seen in the splenic tissue.

It localises to the cell membrane. It is found in the cell projection. The protein localises to the pseudopodium membrane. Its subcellular location is the cytoplasmic vesicle. The enzyme catalyses GTP + H2O = GDP + phosphate + H(+). Regulated by guanine nucleotide exchange factors (GEFs) which promote the exchange of bound GDP for free GTP. Regulated by GTPase activating proteins (GAPs) which increase the GTP hydrolysis activity. Inhibited by GDP dissociation inhibitors (GDIs) which prevent Rab-GDP dissociation. Its function is as follows. The small GTPases Rab are key regulators of intracellular membrane trafficking, from the formation of transport vesicles to their fusion with membranes. Rabs cycle between an inactive GDP-bound form and an active GTP-bound form that is able to recruit to membranes different set of downstream effectors directly responsible for vesicle formation, movement, tethering and fusion. RAB25 regulates epithelial cell differentiation, proliferation and survival, thereby playing key roles in tumorigenesis. Promotes invasive migration of cells in which it functions to localize and maintain integrin alpha-V/beta-1 at the tips of extending pseudopodia. Involved in the regulation of epithelial morphogenesis through the control of CLDN4 expression and localization at tight junctions. May selectively regulate the apical recycling pathway. Together with MYO5B regulates transcytosis. In Oryctolagus cuniculus (Rabbit), this protein is Ras-related protein Rab-25 (RAB25).